Reading from the N-terminus, the 152-residue chain is NADH-quinone oxidoreductase subunit I 1 (152 aa).

4Fe-4S ferredoxin-type domains are found at residues 53 to 83 (MKLGENGETLCIGCNLCALACPENLIAMKSD) and 94 to 123 (VTYVYDVSRCMFCGLCEEACPTQSLKLGTG). The [4Fe-4S] cluster site is built by Cys63, Cys66, Cys69, Cys73, Cys103, Cys106, Cys109, and Cys113.

The protein belongs to the complex I 23 kDa subunit family. As to quaternary structure, NDH-1 is composed of 14 different subunits. Subunits NuoA, H, J, K, L, M, N constitute the membrane sector of the complex. It depends on [4Fe-4S] cluster as a cofactor.

It localises to the cell inner membrane. It catalyses the reaction a quinone + NADH + 5 H(+)(in) = a quinol + NAD(+) + 4 H(+)(out). Its function is as follows. NDH-1 shuttles electrons from NADH, via FMN and iron-sulfur (Fe-S) centers, to quinones in the respiratory chain. The immediate electron acceptor for the enzyme in this species is believed to be ubiquinone. Couples the redox reaction to proton translocation (for every two electrons transferred, four hydrogen ions are translocated across the cytoplasmic membrane), and thus conserves the redox energy in a proton gradient. This Koribacter versatilis (strain Ellin345) protein is NADH-quinone oxidoreductase subunit I 1.